A 351-amino-acid chain; its full sequence is C(7)-cyclitol 7-kinase (351 aa).

This sequence belongs to the ROK (NagC/XylR) family.

It carries out the reaction valienone + ATP = valienone 7-phosphate + ADP + H(+). The enzyme catalyses validone + ATP = validone 7-phosphate + ADP + H(+). Functionally, involved in the biosynthesis of the antifungal agent validamycin A. Catalyzes the phosphorylation of valienone and validone to their 7-phosphate derivatives. This is C(7)-cyclitol 7-kinase from Streptomyces hygroscopicus subsp. limoneus.